Consider the following 108-residue polypeptide: Movement protein TGB2 (108 aa).

Over 1–8 (MPLTPPPD) the chain is Cytoplasmic. A helical transmembrane segment spans residues 9–29 (YTKPFIAVVVGGTLAAFVLLL). Residues 30–71 (TRNTLPHTGDNLHSLPHGGTYCDGTKRIRYGGPHRSHVPELP) lie on the Lumenal side of the membrane. A helical transmembrane segment spans residues 72–92 (AKSWALITVVAILIALHFSCL). Topologically, residues 93–108 (RTHRVHRCVLCHTTSG) are cytoplasmic.

Belongs to the Tymovirales TGBp2 protein family.

It is found in the host endoplasmic reticulum membrane. Its function is as follows. Plays a role in viral cell-to-cell propagation, by facilitating genome transport to neighboring plant cells through plasmosdesmata,. The protein is Movement protein TGB2 of Lily virus X.